The primary structure comprises 107 residues: Large ribosomal subunit protein uL24 (107 aa).

This sequence belongs to the universal ribosomal protein uL24 family. Part of the 50S ribosomal subunit.

Functionally, one of two assembly initiator proteins, it binds directly to the 5'-end of the 23S rRNA, where it nucleates assembly of the 50S subunit. One of the proteins that surrounds the polypeptide exit tunnel on the outside of the subunit. The polypeptide is Large ribosomal subunit protein uL24 (Mesomycoplasma hyopneumoniae (strain J / ATCC 25934 / NCTC 10110) (Mycoplasma hyopneumoniae)).